The following is a 250-amino-acid chain: ATP synthase subunit a (250 aa).

Helical transmembrane passes span 26 to 46 (FTNA…FLYL), 84 to 104 (FFPM…LGMV), 114 to 134 (IIVT…YGFY), 143 to 163 (LFVP…IEII), 193 to 213 (FVAS…LPLI), and 216 to 236 (VALT…FAVL).

It belongs to the ATPase A chain family. F-type ATPases have 2 components, CF(1) - the catalytic core - and CF(0) - the membrane proton channel. CF(1) has five subunits: alpha(3), beta(3), gamma(1), delta(1), epsilon(1). CF(0) has three main subunits: a(1), b(2) and c(9-12). The alpha and beta chains form an alternating ring which encloses part of the gamma chain. CF(1) is attached to CF(0) by a central stalk formed by the gamma and epsilon chains, while a peripheral stalk is formed by the delta and b chains.

The protein localises to the cell inner membrane. Its function is as follows. Key component of the proton channel; it plays a direct role in the translocation of protons across the membrane. The chain is ATP synthase subunit a from Rhizobium meliloti (strain 1021) (Ensifer meliloti).